A 399-amino-acid polypeptide reads, in one-letter code: Tryptophan synthase beta chain (399 aa).

Lysine 90 is subject to N6-(pyridoxal phosphate)lysine.

This sequence belongs to the TrpB family. In terms of assembly, tetramer of two alpha and two beta chains. The cofactor is pyridoxal 5'-phosphate.

It carries out the reaction (1S,2R)-1-C-(indol-3-yl)glycerol 3-phosphate + L-serine = D-glyceraldehyde 3-phosphate + L-tryptophan + H2O. It functions in the pathway amino-acid biosynthesis; L-tryptophan biosynthesis; L-tryptophan from chorismate: step 5/5. The beta subunit is responsible for the synthesis of L-tryptophan from indole and L-serine. The polypeptide is Tryptophan synthase beta chain (Lactiplantibacillus plantarum (strain ATCC BAA-793 / NCIMB 8826 / WCFS1) (Lactobacillus plantarum)).